An 82-amino-acid chain; its full sequence is Conotoxin Cal30 (82 aa).

The first 19 residues, 1–19, serve as a signal peptide directing secretion; the sequence is MEKLIILLLVASLLVTTDS.

May contain 5 disulfide bonds. Expressed by the venom duct.

Its subcellular location is the secreted. In terms of biological role, probable neurotoxin. This is Conotoxin Cal30 from Californiconus californicus (California cone).